The sequence spans 293 residues: Energy-coupling factor transporter ATP-binding protein EcfA2 (293 aa).

The 244-residue stretch at 3–246 (ITFQKVEHRY…ADELEKIGVD (244 aa)) folds into the ABC transporter domain. ATP is bound at residue 40 to 47 (GHTGSGKS).

This sequence belongs to the ABC transporter superfamily. Energy-coupling factor EcfA family. Forms a stable energy-coupling factor (ECF) transporter complex composed of 2 membrane-embedded substrate-binding proteins (S component), 2 ATP-binding proteins (A component) and 2 transmembrane proteins (T component).

It is found in the cell membrane. In terms of biological role, ATP-binding (A) component of a common energy-coupling factor (ECF) ABC-transporter complex. Unlike classic ABC transporters this ECF transporter provides the energy necessary to transport a number of different substrates. The chain is Energy-coupling factor transporter ATP-binding protein EcfA2 from Bacillus thuringiensis (strain Al Hakam).